A 313-amino-acid chain; its full sequence is Oxaloacetate tautomerase Fahd2a, mitochondrial (313 aa).

A mitochondrion-targeting transit peptide spans 1 to 84 (MLGSGRRRLL…TALSVARRAL (84 aa)). Mg(2+) is bound by residues E159, E161, and D190. An N6-acetyllysine; alternate modification is found at K202. K202 bears the N6-succinyllysine; alternate mark. K233 carries the N6-acetyllysine modification.

It belongs to the FAH family. Mg(2+) is required as a cofactor. The cofactor is Mn(2+).

It is found in the mitochondrion. The enzyme catalyses oxaloacetate = enol-oxaloacetate. In terms of biological role, tautomerase that converts enol-oxaloacetate, a strong inhibitor of succinate dehydrogenase, to the physiological keto form of oxaloacetate. It is thereby required to maximize aerobic respiration efficiency by preventing succinate dehydrogenase inhibition. This is Oxaloacetate tautomerase Fahd2a, mitochondrial from Rattus norvegicus (Rat).